The following is a 524-amino-acid chain: 2-isopropylmalate synthase (524 aa).

The Pyruvate carboxyltransferase domain maps to 12-274 (VIIFDTTLRD…WNRIETTMLT (263 aa)). Residues aspartate 21, histidine 209, histidine 211, and asparagine 245 each contribute to the Mn(2+) site. Residues 398-524 (KLMSLTVIAG…EDAPTVAVAG (127 aa)) are regulatory domain.

The protein belongs to the alpha-IPM synthase/homocitrate synthase family. LeuA type 1 subfamily. In terms of assembly, homodimer. Mn(2+) is required as a cofactor.

It localises to the cytoplasm. It carries out the reaction 3-methyl-2-oxobutanoate + acetyl-CoA + H2O = (2S)-2-isopropylmalate + CoA + H(+). It functions in the pathway amino-acid biosynthesis; L-leucine biosynthesis; L-leucine from 3-methyl-2-oxobutanoate: step 1/4. Its function is as follows. Catalyzes the condensation of the acetyl group of acetyl-CoA with 3-methyl-2-oxobutanoate (2-ketoisovalerate) to form 3-carboxy-3-hydroxy-4-methylpentanoate (2-isopropylmalate). The polypeptide is 2-isopropylmalate synthase (Rhodopseudomonas palustris (strain TIE-1)).